Reading from the N-terminus, the 105-residue chain is MAGRTITRADLCEAVYQQVGLSRTESAALVEMVLREIADCLAKGETVKLSSFGSFVVRDKGQRVGRNPKTGEEVPIEPRRVMVFKPSSILKNRINGRTGKAAGRE.

Belongs to the bacterial histone-like protein family. As to quaternary structure, heterodimer of an alpha and a beta chain.

This protein is one of the two subunits of integration host factor, a specific DNA-binding protein that functions in genetic recombination as well as in transcriptional and translational control. This Azorhizobium caulinodans (strain ATCC 43989 / DSM 5975 / JCM 20966 / LMG 6465 / NBRC 14845 / NCIMB 13405 / ORS 571) protein is Integration host factor subunit alpha.